The sequence spans 208 residues: GTP cyclohydrolase 1 (208 aa).

Zn(2+) contacts are provided by Cys-89, His-92, and Cys-163.

It belongs to the GTP cyclohydrolase I family. As to quaternary structure, homomer.

It carries out the reaction GTP + H2O = 7,8-dihydroneopterin 3'-triphosphate + formate + H(+). Its pathway is cofactor biosynthesis; 7,8-dihydroneopterin triphosphate biosynthesis; 7,8-dihydroneopterin triphosphate from GTP: step 1/1. This chain is GTP cyclohydrolase 1, found in Saccharolobus islandicus (strain Y.N.15.51 / Yellowstone #2) (Sulfolobus islandicus).